Consider the following 455-residue polypeptide: tRNA-2-methylthio-N(6)-dimethylallyladenosine synthase (455 aa).

In terms of domain architecture, MTTase N-terminal spans 18–133; the sequence is KKLFIETYGC…LPELIAAVEA (116 aa). Residues C27, C63, C97, C171, C175, and C178 each contribute to the [4Fe-4S] cluster site. Positions 157 to 390 constitute a Radical SAM core domain; it reads CGNHISGFVS…IALQNRLSAE (234 aa). The TRAM domain maps to 393–455; that stretch reads QRCIGKTYEV…SSATLKGEEV (63 aa).

This sequence belongs to the methylthiotransferase family. MiaB subfamily. As to quaternary structure, monomer. [4Fe-4S] cluster is required as a cofactor.

It localises to the cytoplasm. It catalyses the reaction N(6)-dimethylallyladenosine(37) in tRNA + (sulfur carrier)-SH + AH2 + 2 S-adenosyl-L-methionine = 2-methylsulfanyl-N(6)-dimethylallyladenosine(37) in tRNA + (sulfur carrier)-H + 5'-deoxyadenosine + L-methionine + A + S-adenosyl-L-homocysteine + 2 H(+). In terms of biological role, catalyzes the methylthiolation of N6-(dimethylallyl)adenosine (i(6)A), leading to the formation of 2-methylthio-N6-(dimethylallyl)adenosine (ms(2)i(6)A) at position 37 in tRNAs that read codons beginning with uridine. In Bacteroides thetaiotaomicron (strain ATCC 29148 / DSM 2079 / JCM 5827 / CCUG 10774 / NCTC 10582 / VPI-5482 / E50), this protein is tRNA-2-methylthio-N(6)-dimethylallyladenosine synthase.